The sequence spans 255 residues: MLEIGGKTFASRLLLGTGKYPDATTQQQAVEASGTNILTFSVRRLDVFAKGQTNPLAALDLNRYDLLPNTAGAKTAEEAVRLARLARASGMCDMVKVEVIGCDKTLLPDPVETLRASEELIKDGFIVLPYTSDDLLLARRLEELGCHAIMPAASPIGSGQGILNPLALSFIIEQLTVPVIVDAGIGSPADVAYAMELGADAVLLNSAVAHSGDPVKMAQAMKLAVEAGRLGFEAGRIEKKRYATASSPMTGISRP.

Lys96 acts as the Schiff-base intermediate with DXP in catalysis. 1-deoxy-D-xylulose 5-phosphate-binding positions include Gly157, 183–184 (AG), and 205–206 (NS).

It belongs to the ThiG family. As to quaternary structure, homotetramer. Forms heterodimers with either ThiH or ThiS.

The protein localises to the cytoplasm. It catalyses the reaction [ThiS sulfur-carrier protein]-C-terminal-Gly-aminoethanethioate + 2-iminoacetate + 1-deoxy-D-xylulose 5-phosphate = [ThiS sulfur-carrier protein]-C-terminal Gly-Gly + 2-[(2R,5Z)-2-carboxy-4-methylthiazol-5(2H)-ylidene]ethyl phosphate + 2 H2O + H(+). It participates in cofactor biosynthesis; thiamine diphosphate biosynthesis. Functionally, catalyzes the rearrangement of 1-deoxy-D-xylulose 5-phosphate (DXP) to produce the thiazole phosphate moiety of thiamine. Sulfur is provided by the thiocarboxylate moiety of the carrier protein ThiS. In vitro, sulfur can be provided by H(2)S. This Exiguobacterium sibiricum (strain DSM 17290 / CCUG 55495 / CIP 109462 / JCM 13490 / 255-15) protein is Thiazole synthase.